Consider the following 68-residue polypeptide: Phosphatidylinositol N-acetylglucosaminyltransferase ERI1 subunit (68 aa).

The next 2 membrane-spanning stretches (helical) occupy residues 8–28 (FLVL…FYWL) and 34–54 (FLHY…WALI).

In terms of assembly, component of the phosphatidylinositol N-acetylglucosaminyltransferase (GPI-GlcNAc transferase) complex composed of at least GPI1, GPI2, GPI3, GPI15, GPI19 and ERI1. Interacts with GPI2. Interacts with GTP-bound RAS2 in an effector loop-dependent manner.

It localises to the endoplasmic reticulum membrane. It participates in glycolipid biosynthesis; glycosylphosphatidylinositol-anchor biosynthesis. Functionally, probable component of the GPI-GlcNAc transferase (GPI-GnT) complex in the endoplasmic reticulum, a complex that catalyzes transfer of GlcNAc from UDP-GlcNAc to an acceptor phosphatidylinositol, the first step in the production of GPI-anchors for cell surface proteins. Ras may inhibit the enzyme activity of the GPI-GnT complex via the association between ERI1 and RAS2. This Saccharomyces cerevisiae (strain ATCC 204508 / S288c) (Baker's yeast) protein is Phosphatidylinositol N-acetylglucosaminyltransferase ERI1 subunit (ERI1).